Consider the following 202-residue polypeptide: Phosphatidyl-N-methylethanolamine N-methyltransferase (202 aa).

Topologically, residues 1–12 (MTTLSDYVDFSQ) are lumenal. The helical intramembrane region spans 13-33 (DSFKYAALSIAFNPIFWNVVA). Over 34-45 (RAEYRSHFLTRI) the chain is Lumenal. The chain crosses the membrane as a helical span at residues 46–66 (FGSPYRGCYFLAITIFSLGIL). At 67 to 90 (RDHIYQQALEDQPYYAPVHQPVLG) the chain is on the cytoplasmic side. A helical transmembrane segment spans residues 91-111 (GALFAVGSVLVLSSMYALGVT). 95–97 (AVG) contributes to the S-adenosyl-L-methionine binding site. The Lumenal portion of the chain corresponds to 112-154 (GTYLGDYFGILMDAPVTGFPFNVTGSPMYWGSTLNFLGVALYK). A helical transmembrane segment spans residues 155-175 (GKVAGILLTALVFVLYWFALK). The Cytoplasmic segment spans residues 176-202 (WEDPFTAEIYAKRERERAKSKRGGKNQ). 177-178 (ED) contacts S-adenosyl-L-methionine.

The protein belongs to the class VI-like SAM-binding methyltransferase superfamily. PEMT/PEM2 methyltransferase family.

It localises to the endoplasmic reticulum membrane. Its subcellular location is the mitochondrion membrane. The catalysed reaction is a 1,2-diacyl-sn-glycero-3-phospho-N-methylethanolamine + S-adenosyl-L-methionine = a 1,2-diacyl-sn-glycero-3-phospho-N,N-dimethylethanolamine + S-adenosyl-L-homocysteine + H(+). It carries out the reaction a 1,2-diacyl-sn-glycero-3-phospho-N,N-dimethylethanolamine + S-adenosyl-L-methionine = a 1,2-diacyl-sn-glycero-3-phosphocholine + S-adenosyl-L-homocysteine + H(+). The protein operates within phospholipid metabolism; phosphatidylcholine biosynthesis. Its function is as follows. Catalyzes the second two steps of the methylation pathway of phosphatidylcholine biosynthesis, the SAM-dependent methylation of phosphatidylmonomethylethanolamine (PMME) to phosphatidyldimethylethanolamine (PDME) and of PDME to phosphatidylcholine (PC). The protein is Phosphatidyl-N-methylethanolamine N-methyltransferase of Emericella nidulans (strain FGSC A4 / ATCC 38163 / CBS 112.46 / NRRL 194 / M139) (Aspergillus nidulans).